We begin with the raw amino-acid sequence, 328 residues long: Aspartate carbamoyltransferase catalytic subunit (328 aa).

R70 and T71 together coordinate carbamoyl phosphate. Residue K98 participates in L-aspartate binding. R120, H150, and Q153 together coordinate carbamoyl phosphate. 2 residues coordinate L-aspartate: R183 and R238. Carbamoyl phosphate is bound by residues G279 and P280.

This sequence belongs to the aspartate/ornithine carbamoyltransferase superfamily. ATCase family. As to quaternary structure, heterododecamer (2C3:3R2) of six catalytic PyrB chains organized as two trimers (C3), and six regulatory PyrI chains organized as three dimers (R2).

It carries out the reaction carbamoyl phosphate + L-aspartate = N-carbamoyl-L-aspartate + phosphate + H(+). Its pathway is pyrimidine metabolism; UMP biosynthesis via de novo pathway; (S)-dihydroorotate from bicarbonate: step 2/3. Its function is as follows. Catalyzes the condensation of carbamoyl phosphate and aspartate to form carbamoyl aspartate and inorganic phosphate, the committed step in the de novo pyrimidine nucleotide biosynthesis pathway. The chain is Aspartate carbamoyltransferase catalytic subunit from Methylococcus capsulatus (strain ATCC 33009 / NCIMB 11132 / Bath).